We begin with the raw amino-acid sequence, 142 residues long: Large ribosomal subunit protein uL13 (142 aa).

The protein belongs to the universal ribosomal protein uL13 family. In terms of assembly, part of the 50S ribosomal subunit.

In terms of biological role, this protein is one of the early assembly proteins of the 50S ribosomal subunit, although it is not seen to bind rRNA by itself. It is important during the early stages of 50S assembly. This Hydrogenovibrio crunogenus (strain DSM 25203 / XCL-2) (Thiomicrospira crunogena) protein is Large ribosomal subunit protein uL13.